Here is a 133-residue protein sequence, read N- to C-terminus: Small ribosomal subunit protein uS8 (133 aa).

Belongs to the universal ribosomal protein uS8 family. As to quaternary structure, part of the 30S ribosomal subunit. Contacts proteins S5 and S12.

Its function is as follows. One of the primary rRNA binding proteins, it binds directly to 16S rRNA central domain where it helps coordinate assembly of the platform of the 30S subunit. The chain is Small ribosomal subunit protein uS8 from Rippkaea orientalis (strain PCC 8801 / RF-1) (Cyanothece sp. (strain PCC 8801)).